Here is a 340-residue protein sequence, read N- to C-terminus: Anthranilate phosphoribosyltransferase (340 aa).

Residues Gly80, 83-84, Thr88, 90-93, 108-116, and Ser120 contribute to the 5-phospho-alpha-D-ribose 1-diphosphate site; these read GD, NIST, and KHGNRAMSS. Gly80 provides a ligand contact to anthranilate. Ser92 is a binding site for Mg(2+). Residue Asn111 coordinates anthranilate. Arg166 lines the anthranilate pocket. Mg(2+)-binding residues include Asp225 and Glu226.

This sequence belongs to the anthranilate phosphoribosyltransferase family. As to quaternary structure, homodimer. Requires Mg(2+) as cofactor.

It carries out the reaction N-(5-phospho-beta-D-ribosyl)anthranilate + diphosphate = 5-phospho-alpha-D-ribose 1-diphosphate + anthranilate. It participates in amino-acid biosynthesis; L-tryptophan biosynthesis; L-tryptophan from chorismate: step 2/5. Its function is as follows. Catalyzes the transfer of the phosphoribosyl group of 5-phosphorylribose-1-pyrophosphate (PRPP) to anthranilate to yield N-(5'-phosphoribosyl)-anthranilate (PRA). The sequence is that of Anthranilate phosphoribosyltransferase from Roseiflexus castenholzii (strain DSM 13941 / HLO8).